The chain runs to 831 residues: Probable DNA-directed RNA polymerase (831 aa).

Residues Asp490, Lys560, and Asp738 contribute to the active site.

This sequence belongs to the phage and mitochondrial RNA polymerase family.

The protein resides in the mitochondrion. The catalysed reaction is RNA(n) + a ribonucleoside 5'-triphosphate = RNA(n+1) + diphosphate. DNA-dependent RNA polymerase catalyzes the transcription of DNA into RNA using the four ribonucleoside triphosphates as substrates. This is Probable DNA-directed RNA polymerase from Gelasinospora sp. (strain G114).